Here is a 537-residue protein sequence, read N- to C-terminus: Membrane protein insertase YidC (537 aa).

4 helical membrane passes run 5–25 (LIIA…IFPT), 353–373 (GNYG…FFPL), 418–438 (VNPL…FGLY), and 495–515 (MLML…GLVI).

It belongs to the OXA1/ALB3/YidC family. Type 1 subfamily. In terms of assembly, interacts with the Sec translocase complex via SecD. Specifically interacts with transmembrane segments of nascent integral membrane proteins during membrane integration.

The protein localises to the cell inner membrane. Functionally, required for the insertion and/or proper folding and/or complex formation of integral membrane proteins into the membrane. Involved in integration of membrane proteins that insert both dependently and independently of the Sec translocase complex, as well as at least some lipoproteins. Aids folding of multispanning membrane proteins. The sequence is that of Membrane protein insertase YidC from Citrifermentans bemidjiense (strain ATCC BAA-1014 / DSM 16622 / JCM 12645 / Bem) (Geobacter bemidjiensis).